We begin with the raw amino-acid sequence, 363 residues long: Ethanolamine kinase 1 (363 aa).

It belongs to the choline/ethanolamine kinase family.

It localises to the cytoplasm. It carries out the reaction ethanolamine + ATP = phosphoethanolamine + ADP + H(+). Its pathway is phospholipid metabolism; phosphatidylethanolamine biosynthesis; phosphatidylethanolamine from ethanolamine: step 1/3. Functionally, highly specific for ethanolamine phosphorylation. May be a rate-controlling step in phosphatidylethanolamine biosynthesis. The sequence is that of Ethanolamine kinase 1 (Etnk1) from Mus musculus (Mouse).